We begin with the raw amino-acid sequence, 962 residues long: Cohesin subunit psc3 (962 aa).

Positions 1–72 (MSESVTTGSD…GVNVKRSRRN (72 aa)) are disordered. Polar residues predominate over residues 21-30 (VMLSQSFDPM). A compositionally biased stretch (basic residues) spans 51-71 (SSKKRHPRPNSKGVNVKRSRR). The stretch at 236–275 (LCEKSKELLNEHAIATKQLEKEEKRSRVNRNRINELNNSL) forms a coiled coil. The SCD domain maps to 297-382 (FVHRYRDVEP…SRFKERILEM (86 aa)).

The protein belongs to the SCC3 family. Cohesin complexes are composed of the psm1/smc1 and psm3/smc3 heterodimer attached via their hinge domain, rad21/scc1 which link them, and psc3/scc3, which interacts with rad21. Interacts with swi6. The interaction with swi6 may contribute to recruit cohesin complex to heterochromatin.

It localises to the nucleus. The protein localises to the chromosome. Its subcellular location is the centromere. In terms of biological role, component of cohesin complex, a complex required for the cohesion of sister chromatids after DNA replication. The cohesin complex apparently forms a large proteinaceous ring within which sister chromatids can be trapped. At anaphase, the rad21 subunit of the cohesin complex is cleaved and dissociates from chromatin, allowing sister chromatids to segregate. The cohesin complex may also play a role in spindle pole assembly during mitosis. This is Cohesin subunit psc3 (psc3) from Schizosaccharomyces pombe (strain 972 / ATCC 24843) (Fission yeast).